Consider the following 264-residue polypeptide: NAD-capped RNA hydrolase NudC (264 aa).

Arg70 serves as a coordination point for substrate. Positions 99 and 102 each coordinate Zn(2+). Residue Glu112 participates in substrate binding. Zn(2+) contacts are provided by Cys117 and Cys122. Residue Tyr127 coordinates substrate. The Nudix hydrolase domain maps to 128–257 (PVICPSIIVA…TIALKLINAT (130 aa)). Residues Ala166, Glu182, and Glu186 each contribute to the a divalent metal cation site. The short motif at 167 to 188 (GFVEIGESFEQTVEREVFEETG) is the Nudix box element. 200 to 207 (QPWAFPNS) contacts substrate. Glu227 lines the a divalent metal cation pocket. Residue Ala250 coordinates substrate.

Belongs to the Nudix hydrolase family. NudC subfamily. Homodimer. The cofactor is Mg(2+). Requires Mn(2+) as cofactor. Zn(2+) is required as a cofactor.

It catalyses the reaction a 5'-end NAD(+)-phospho-ribonucleoside in mRNA + H2O = a 5'-end phospho-adenosine-phospho-ribonucleoside in mRNA + beta-nicotinamide D-ribonucleotide + 2 H(+). It carries out the reaction NAD(+) + H2O = beta-nicotinamide D-ribonucleotide + AMP + 2 H(+). The enzyme catalyses NADH + H2O = reduced beta-nicotinamide D-ribonucleotide + AMP + 2 H(+). MRNA decapping enzyme that specifically removes the nicotinamide adenine dinucleotide (NAD) cap from a subset of mRNAs by hydrolyzing the diphosphate linkage to produce nicotinamide mononucleotide (NMN) and 5' monophosphate mRNA. The NAD-cap is present at the 5'-end of some mRNAs and stabilizes RNA against 5'-processing. Has preference for mRNAs with a 5'-end purine. Catalyzes the hydrolysis of a broad range of dinucleotide pyrophosphates. This chain is NAD-capped RNA hydrolase NudC, found in Actinobacillus succinogenes (strain ATCC 55618 / DSM 22257 / CCUG 43843 / 130Z).